Here is a 398-residue protein sequence, read N- to C-terminus: ATP-dependent RNA helicase eIF4A (398 aa).

Residues 25 to 53 (DSFDTMNLKPELLRGVYAYGFERPSAIQQ) carry the Q motif motif. A Helicase ATP-binding domain is found at 56 to 226 (IMPVIKGHDV…TKFMRDPVRI (171 aa)). 69–76 (AQSGTGKT) is a binding site for ATP. The DEAD box motif lies at 174-177 (DEAD). The 162-residue stretch at 237 to 398 (GIKQFYIAVE…EMPMNVADLI (162 aa)) folds into the Helicase C-terminal domain.

This sequence belongs to the DEAD box helicase family. eIF4A subfamily. As to quaternary structure, component of the eIF4F complex, which composition varies with external and internal environmental conditions. It is composed of at least eIF4A, eIF4E and eIF4G.

The protein resides in the cytoplasm. The catalysed reaction is ATP + H2O = ADP + phosphate + H(+). Its function is as follows. ATP-dependent RNA helicase which is a subunit of the eIF4F complex involved in cap recognition and is required for mRNA binding to ribosome. In the current model of translation initiation, eIF4A unwinds RNA secondary structures in the 5'-UTR of mRNAs which is necessary to allow efficient binding of the small ribosomal subunit, and subsequent scanning for the initiator codon. The chain is ATP-dependent RNA helicase eIF4A (tif1) from Sclerotinia sclerotiorum (strain ATCC 18683 / 1980 / Ss-1) (White mold).